Reading from the N-terminus, the 371-residue chain is Queuine tRNA-ribosyltransferase (371 aa).

The Proton acceptor role is filled by D90. Residues 90 to 94 (DSGGF), D144, Q188, and G215 contribute to the substrate site. The segment at 246–252 (GVGTPED) is RNA binding. D265 acts as the Nucleophile in catalysis. An RNA binding; important for wobble base 34 recognition region spans residues 270-274 (TRNAR). 4 residues coordinate Zn(2+): C303, C305, C308, and H334.

The protein belongs to the queuine tRNA-ribosyltransferase family. In terms of assembly, homodimer. Within each dimer, one monomer is responsible for RNA recognition and catalysis, while the other monomer binds to the replacement base PreQ1. Zn(2+) serves as cofactor.

It catalyses the reaction 7-aminomethyl-7-carbaguanine + guanosine(34) in tRNA = 7-aminomethyl-7-carbaguanosine(34) in tRNA + guanine. It functions in the pathway tRNA modification; tRNA-queuosine biosynthesis. In terms of biological role, catalyzes the base-exchange of a guanine (G) residue with the queuine precursor 7-aminomethyl-7-deazaguanine (PreQ1) at position 34 (anticodon wobble position) in tRNAs with GU(N) anticodons (tRNA-Asp, -Asn, -His and -Tyr). Catalysis occurs through a double-displacement mechanism. The nucleophile active site attacks the C1' of nucleotide 34 to detach the guanine base from the RNA, forming a covalent enzyme-RNA intermediate. The proton acceptor active site deprotonates the incoming PreQ1, allowing a nucleophilic attack on the C1' of the ribose to form the product. After dissociation, two additional enzymatic reactions on the tRNA convert PreQ1 to queuine (Q), resulting in the hypermodified nucleoside queuosine (7-(((4,5-cis-dihydroxy-2-cyclopenten-1-yl)amino)methyl)-7-deazaguanosine). The polypeptide is Queuine tRNA-ribosyltransferase (Neisseria meningitidis serogroup A / serotype 4A (strain DSM 15465 / Z2491)).